The sequence spans 832 residues: Disintegrin and metalloproteinase domain-containing protein 23 (832 aa).

Residues 1–10 are compositionally biased toward polar residues; that stretch reads MKPPGSSSRQ. Residues 1–37 are disordered; sequence MKPPGSSSRQPPLAGCSLAGASCGPQRGPAGSVPASA. Residues 1–59 form the signal peptide; the sequence is MKPPGSSSRQPPLAGCSLAGASCGPQRGPAGSVPASAPARTPPCRLLLVLLLLPPLAAS. Residues 28–37 are compositionally biased toward low complexity; that stretch reads GPAGSVPASA. Residues 60 to 286 constitute a propeptide that is removed on maturation; the sequence is SRPRAWGAAA…ELQWLKRRKR (227 aa). Residues N76, N96, N100, and N263 are each glycosylated (N-linked (GlcNAc...) asparagine). The Extracellular segment spans residues 287–792; the sequence is AVNPSRGIFE…EGPKGPSATN (506 aa). A Peptidase M12B domain is found at 299-496; the sequence is KYLELMIVND…GGGACLFNRP (198 aa). Intrachain disulfides connect C408/C491, C450/C475, and C452/C459. One can recognise a Disintegrin domain in the interval 502–588; it reads PTECGNGYVE…QCPPNLHKQD (87 aa). 2 N-linked (GlcNAc...) asparagine glycosylation sites follow: N547 and N548. An intrachain disulfide couples C560 to C580. The tract at residues 563-568 is may bind the integrin receptor; that stretch reads AVNECD. N-linked (GlcNAc...) asparagine glycosylation is found at N664 and N732. The 38-residue stretch at 732–769 folds into the EGF-like domain; the sequence is NMSSCPLDSKGKVCSGHGVCSNEATCICDFTWAGTDCS. 3 disulfides stabilise this stretch: C736–C751, C745–C757, and C759–C768. The helical transmembrane segment at 793 to 813 threads the bilayer; sequence LIIGSIAGAILVAAIVLGGTG. Over 814 to 832 the chain is Cytoplasmic; that stretch reads WGFKNVKKRRFDPTQQGPI.

In terms of assembly, can bind to LGI1 and LGI4. Ligand for integrin alpha-V/beta-3. As to expression, highly expressed in the brain and weakly expressed in the heart. In the brain, expressed prominently in the amygdala, caudate nucleus, hypothalamus, thalamus, cerebral cortex and occipital pole.

The protein resides in the cell membrane. It is found in the secreted. Functionally, may play a role in cell-cell and cell-matrix interactions. This is a non-catalytic metalloprotease-like protein. In Homo sapiens (Human), this protein is Disintegrin and metalloproteinase domain-containing protein 23 (ADAM23).